Reading from the N-terminus, the 381-residue chain is uncharacterized protein (381 aa).

Disordered stretches follow at residues 1–20 and 36–381; these read MPYYTRDDNDVDDFDEFDPT and IPPS…EDDE. Over residues 9-18 the composition is skewed to acidic residues; it reads NDVDDFDEFD. Composition is skewed to basic and acidic residues over residues 166–175 and 186–237; these read TEVEYGRRPE and SESE…EGYR. Ser339, Ser346, and Ser357 each carry phosphoserine. The segment covering 364–374 has biased composition (basic residues); that stretch reads KKHRHKHHHQK.

This is an uncharacterized protein from Arabidopsis thaliana (Mouse-ear cress).